Reading from the N-terminus, the 137-residue chain is uncharacterized protein (137 aa).

Residues 4–21 (ISWQIVLAVIGVVAGFII) traverse the membrane as a helical segment.

The protein resides in the membrane. This is an uncharacterized protein from Archaeoglobus fulgidus (strain ATCC 49558 / DSM 4304 / JCM 9628 / NBRC 100126 / VC-16).